The primary structure comprises 276 residues: Large ribosomal subunit protein uL2 (276 aa).

Disordered stretches follow at residues 1 to 61 (MALK…HKQK) and 224 to 276 (AMNP…KKKN). Positions 15–31 (GRIDLRKDEITAQKPEK) are enriched in basic and acidic residues.

Belongs to the universal ribosomal protein uL2 family. Part of the 50S ribosomal subunit. Forms a bridge to the 30S subunit in the 70S ribosome.

Functionally, one of the primary rRNA binding proteins. Required for association of the 30S and 50S subunits to form the 70S ribosome, for tRNA binding and peptide bond formation. It has been suggested to have peptidyltransferase activity; this is somewhat controversial. Makes several contacts with the 16S rRNA in the 70S ribosome. In Treponema denticola (strain ATCC 35405 / DSM 14222 / CIP 103919 / JCM 8153 / KCTC 15104), this protein is Large ribosomal subunit protein uL2.